The following is a 109-amino-acid chain: Large ribosomal subunit protein uL22 (109 aa).

This sequence belongs to the universal ribosomal protein uL22 family. In terms of assembly, part of the 50S ribosomal subunit.

Its function is as follows. This protein binds specifically to 23S rRNA; its binding is stimulated by other ribosomal proteins, e.g. L4, L17, and L20. It is important during the early stages of 50S assembly. It makes multiple contacts with different domains of the 23S rRNA in the assembled 50S subunit and ribosome. In terms of biological role, the globular domain of the protein is located near the polypeptide exit tunnel on the outside of the subunit, while an extended beta-hairpin is found that lines the wall of the exit tunnel in the center of the 70S ribosome. The chain is Large ribosomal subunit protein uL22 from Azoarcus sp. (strain BH72).